A 223-amino-acid chain; its full sequence is Ribonuclease 3 (223 aa).

The RNase III domain maps to 4–127 (LEEFERNLGY…VMGAIYLEAG (124 aa)). Glu-40 lines the Mg(2+) pocket. The active site involves Asp-44. Mg(2+) contacts are provided by Asp-113 and Glu-116. Residue Glu-116 is part of the active site. One can recognise a DRBM domain in the interval 154–223 (DYKTALQEVT…AKIALEKIKK (70 aa)).

The protein belongs to the ribonuclease III family. In terms of assembly, homodimer. Requires Mg(2+) as cofactor.

It localises to the cytoplasm. The catalysed reaction is Endonucleolytic cleavage to 5'-phosphomonoester.. Its function is as follows. Digests double-stranded RNA. Involved in the processing of primary rRNA transcript to yield the immediate precursors to the large and small rRNAs (23S and 16S). Processes some mRNAs, and tRNAs when they are encoded in the rRNA operon. Processes pre-crRNA and tracrRNA of type II CRISPR loci if present in the organism. This is Ribonuclease 3 from Campylobacter concisus (strain 13826).